Reading from the N-terminus, the 476-residue chain is ATP synthase subunit beta (476 aa).

ATP is bound at residue Gly-158 to Thr-165.

It belongs to the ATPase alpha/beta chains family. In terms of assembly, F-type ATPases have 2 components, CF(1) - the catalytic core - and CF(0) - the membrane proton channel. CF(1) has five subunits: alpha(3), beta(3), gamma(1), delta(1), epsilon(1). CF(0) has three main subunits: a(1), b(2) and c(9-12). The alpha and beta chains form an alternating ring which encloses part of the gamma chain. CF(1) is attached to CF(0) by a central stalk formed by the gamma and epsilon chains, while a peripheral stalk is formed by the delta and b chains.

It is found in the cell inner membrane. It catalyses the reaction ATP + H2O + 4 H(+)(in) = ADP + phosphate + 5 H(+)(out). In terms of biological role, produces ATP from ADP in the presence of a proton gradient across the membrane. The catalytic sites are hosted primarily by the beta subunits. The sequence is that of ATP synthase subunit beta from Paracidovorax citrulli (strain AAC00-1) (Acidovorax citrulli).